A 210-amino-acid chain; its full sequence is 3-hexulose-6-phosphate synthase (210 aa).

It belongs to the HPS/KGPDC family. HPS subfamily.

The enzyme catalyses D-ribulose 5-phosphate + formaldehyde = D-arabino-hex-3-ulose 6-phosphate. The protein operates within one-carbon metabolism; formaldehyde assimilation via RuMP pathway; D-fructose 6-phosphate from D-ribulose 5-phosphate and formaldehyde: step 1/2. Catalyzes the condensation of ribulose 5-phosphate with formaldehyde to form 3-hexulose 6-phosphate. Together with HxlB, may act as a formaldehyde detoxification system. The protein is 3-hexulose-6-phosphate synthase (hxlA) of Bacillus subtilis (strain 168).